A 340-amino-acid polypeptide reads, in one-letter code: Serpentine receptor class alpha-18 (340 aa).

Transmembrane regions (helical) follow at residues phenylalanine 29–isoleucine 49, valine 109–leucine 129, phenylalanine 149–valine 169, valine 198–valine 218, isoleucine 249–isoleucine 269, and isoleucine 285–phenylalanine 305.

The protein belongs to the nematode receptor-like protein sra family.

It localises to the membrane. This chain is Serpentine receptor class alpha-18 (sra-18), found in Caenorhabditis elegans.